Here is a 145-residue protein sequence, read N- to C-terminus: Histone H2B.10 (145 aa).

Basic and acidic residues predominate over residues 1–15 (MAKADKKPAEKKPAE). Residues 1–53 (MAKADKKPAEKKPAEKTPAAEPAAAAEKKPKAGKKLPKEPAGAGDKKKKRSKK) form a disordered region. Lysine 3 is subject to N6-methyllysine. N6-acetyllysine is present on residues lysine 6 and lysine 11. Residue lysine 12 is modified to N6,N6-dimethyllysine. N6-acetyllysine is present on residues lysine 16, lysine 28, and lysine 34. Over residues 16–25 (KTPAAEPAAA) the composition is skewed to low complexity. N6-acetyllysine; partial is present on lysine 35. Residue lysine 141 forms a Glycyl lysine isopeptide (Lys-Gly) (interchain with G-Cter in ubiquitin) linkage.

This sequence belongs to the histone H2B family. As to quaternary structure, the nucleosome is a histone octamer containing two molecules each of H2A, H2B, H3 and H4 assembled in one H3-H4 heterotetramer and two H2A-H2B heterodimers. The octamer wraps approximately 147 bp of DNA. Interacts with ORTH2. Post-translationally, can be acetylated to form H2BK5ac, H2BK10ac, H2BK15ac, H2BK27ac, H2BK33ac and H2BK34ac. In terms of processing, dimethylated to form H2BK11me2. Monoubiquitinated by BRE1 to form H2BK143ub1 and deubiquitinated by UBP26. Required for heterochromatic histone H3 di- and trimethylation at H3K4me. May give a specific tag for epigenetic transcriptional activation.

It localises to the nucleus. It is found in the chromosome. Its function is as follows. Core component of nucleosome. Nucleosomes wrap and compact DNA into chromatin, limiting DNA accessibility to the cellular machineries which require DNA as a template. Histones thereby play a central role in transcription regulation, DNA repair, DNA replication and chromosomal stability. DNA accessibility is regulated via a complex set of post-translational modifications of histones, also called histone code, and nucleosome remodeling. The polypeptide is Histone H2B.10 (Arabidopsis thaliana (Mouse-ear cress)).